The chain runs to 393 residues: Interferon regulatory factor 9 (393 aa).

Positions 9 to 116 form a DNA-binding region, IRF tryptophan pentad repeat; it reads TRKLRNWVVE…EPYKVYQLLP (108 aa). Disordered stretches follow at residues 120–151 and 163–202; these read VSGQ…AMQN and LNNE…APFQ. At Ser139 the chain carries Phosphoserine.

It belongs to the IRF family. In terms of assembly, interacts with STAT2 in the cytoplasm. Forms the interferon-stimulated gene factor 3 complex (ISGF3) with the heterodimer STAT1:STAT2; upon stimulation. As to quaternary structure, (Microbial infection) Interacts with measles virus V protein; this interaction prevents the binding of IRF9 to STAT2 and thereby the type I interferon signaling pathway. (Microbial infection) Ubiquitinated by Herpes simplex virus 2 E3 ubiquitin ligase ICP22.

The protein resides in the cytoplasm. It localises to the nucleus. Functionally, transcription factor that plays an essential role in anti-viral immunity. It mediates signaling by type I IFNs (IFN-alpha and IFN-beta). Following type I IFN binding to cell surface receptors, Jak kinases (TYK2 and JAK1) are activated, leading to tyrosine phosphorylation of STAT1 and STAT2. IRF9/ISGF3G associates with the phosphorylated STAT1:STAT2 dimer to form a complex termed ISGF3 transcription factor, that enters the nucleus. ISGF3 binds to the IFN stimulated response element (ISRE) to activate the transcription of interferon stimulated genes, which drive the cell in an antiviral state. This is Interferon regulatory factor 9 (IRF9) from Homo sapiens (Human).